Here is a 396-residue protein sequence, read N- to C-terminus: MSGSSLRRVAVFGATGSIGASALDVIARHPERLRASVLSAGSKVDALLALCVLHRPAHAVIADAALYPALRDGLRAAGLTTQAHAGDQALDALAASDACDTVVAAIVGAAGLSSTLAAAAAGKRLLLANKESLVLAGELLTRTAAAAGAEIIPIDSEHSAIFQCLRSCDASRGVRRVILTASGGPFRGRQRAQLAEVTPAQAVAHPKWSMGPKISVDSATLMNKGLEVIEAHHLFGLPGEQIDVLVHPQSLVHSLVEFVDGSTLAQLGLPDMRTTLAVGLAWPERVESGVGGLDLLQQGRLDFEAPDTEAFPCLRLAWDALRAGGTAPAILNAANEVAVSAFLQGKVGFLAIPALVEHTLTTLQRQNADTLNALLFADAEARRTTERALAHHSLHA.

NADPH-binding residues include Thr15, Gly16, Ser17, Ile18, Gly41, and Asn129. Lys130 contributes to the 1-deoxy-D-xylulose 5-phosphate binding site. An NADPH-binding site is contributed by Glu131. A Mn(2+)-binding site is contributed by Asp155. 1-deoxy-D-xylulose 5-phosphate-binding residues include Ser156, Glu157, Ser182, and His205. Glu157 provides a ligand contact to Mn(2+). Gly211 is a binding site for NADPH. 4 residues coordinate 1-deoxy-D-xylulose 5-phosphate: Ser218, Asn223, Lys224, and Glu227. Residue Glu227 participates in Mn(2+) binding.

It belongs to the DXR family. It depends on Mg(2+) as a cofactor. Mn(2+) serves as cofactor.

It carries out the reaction 2-C-methyl-D-erythritol 4-phosphate + NADP(+) = 1-deoxy-D-xylulose 5-phosphate + NADPH + H(+). Its pathway is isoprenoid biosynthesis; isopentenyl diphosphate biosynthesis via DXP pathway; isopentenyl diphosphate from 1-deoxy-D-xylulose 5-phosphate: step 1/6. In terms of biological role, catalyzes the NADPH-dependent rearrangement and reduction of 1-deoxy-D-xylulose-5-phosphate (DXP) to 2-C-methyl-D-erythritol 4-phosphate (MEP). The protein is 1-deoxy-D-xylulose 5-phosphate reductoisomerase of Xanthomonas campestris pv. campestris (strain 8004).